The following is a 132-amino-acid chain: MGRVRTKTTKRASRVVIEKYYPRLTLDFQTNKRIVDEVAIIASKRLRNKIAGYTTHLMKRIQRGPVRGISFKLQEEERERKDQYVPEVSELEKDKINVDQDTKDMLKALGYDSIPTVVVAASRPERPFRYRH.

Residue Ser43 is modified to Phosphoserine.

The protein belongs to the eukaryotic ribosomal protein eS17 family. In terms of assembly, component of the small ribosomal subunit (SSU). Mature yeast ribosomes consist of a small (40S) and a large (60S) subunit. The 40S small subunit contains 1 molecule of ribosomal RNA (18S rRNA) and at least 33 different proteins. The large 60S subunit contains 3 rRNA molecules (25S, 5.8S and 5S rRNA) and at least 46 different proteins.

It is found in the cytoplasm. Its function is as follows. Component of the ribosome, a large ribonucleoprotein complex responsible for the synthesis of proteins in the cell. The small ribosomal subunit (SSU) binds messenger RNAs (mRNAs) and translates the encoded message by selecting cognate aminoacyl-transfer RNA (tRNA) molecules. The large subunit (LSU) contains the ribosomal catalytic site termed the peptidyl transferase center (PTC), which catalyzes the formation of peptide bonds, thereby polymerizing the amino acids delivered by tRNAs into a polypeptide chain. The nascent polypeptides leave the ribosome through a tunnel in the LSU and interact with protein factors that function in enzymatic processing, targeting, and the membrane insertion of nascent chains at the exit of the ribosomal tunnel. The sequence is that of Small ribosomal subunit protein eS17B (rps1702) from Schizosaccharomyces pombe (strain 972 / ATCC 24843) (Fission yeast).